The following is a 283-amino-acid chain: tRNA-cytidine(32) 2-sulfurtransferase (283 aa).

Residues 49–54 (SGGKDS) carry the PP-loop motif motif. [4Fe-4S] cluster-binding residues include C124, C127, and C215.

This sequence belongs to the TtcA family. Homodimer. Requires Mg(2+) as cofactor. It depends on [4Fe-4S] cluster as a cofactor.

The protein resides in the cytoplasm. The enzyme catalyses cytidine(32) in tRNA + S-sulfanyl-L-cysteinyl-[cysteine desulfurase] + AH2 + ATP = 2-thiocytidine(32) in tRNA + L-cysteinyl-[cysteine desulfurase] + A + AMP + diphosphate + H(+). It functions in the pathway tRNA modification. In terms of biological role, catalyzes the ATP-dependent 2-thiolation of cytidine in position 32 of tRNA, to form 2-thiocytidine (s(2)C32). The sulfur atoms are provided by the cysteine/cysteine desulfurase (IscS) system. This Acaryochloris marina (strain MBIC 11017) protein is tRNA-cytidine(32) 2-sulfurtransferase.